Here is a 329-residue protein sequence, read N- to C-terminus: Methionyl-tRNA formyltransferase (329 aa).

117-120 serves as a coordination point for (6S)-5,6,7,8-tetrahydrofolate; sequence SLLP.

The protein belongs to the Fmt family.

The enzyme catalyses L-methionyl-tRNA(fMet) + (6R)-10-formyltetrahydrofolate = N-formyl-L-methionyl-tRNA(fMet) + (6S)-5,6,7,8-tetrahydrofolate + H(+). Attaches a formyl group to the free amino group of methionyl-tRNA(fMet). The formyl group appears to play a dual role in the initiator identity of N-formylmethionyl-tRNA by promoting its recognition by IF2 and preventing the misappropriation of this tRNA by the elongation apparatus. The polypeptide is Methionyl-tRNA formyltransferase (Paracidovorax citrulli (strain AAC00-1) (Acidovorax citrulli)).